Consider the following 284-residue polypeptide: Pantothenate synthetase (284 aa).

31–38 (MGNLHAGH) serves as a coordination point for ATP. The active-site Proton donor is H38. (R)-pantoate is bound at residue Q62. Beta-alanine is bound at residue Q62. 150 to 153 (GKKD) serves as a coordination point for ATP. Q156 contacts (R)-pantoate. ATP-binding positions include V179 and 187–190 (MSSR).

The protein belongs to the pantothenate synthetase family. As to quaternary structure, homodimer.

Its subcellular location is the cytoplasm. The catalysed reaction is (R)-pantoate + beta-alanine + ATP = (R)-pantothenate + AMP + diphosphate + H(+). It participates in cofactor biosynthesis; (R)-pantothenate biosynthesis; (R)-pantothenate from (R)-pantoate and beta-alanine: step 1/1. Its function is as follows. Catalyzes the condensation of pantoate with beta-alanine in an ATP-dependent reaction via a pantoyl-adenylate intermediate. This Xanthomonas campestris pv. campestris (strain 8004) protein is Pantothenate synthetase.